Consider the following 406-residue polypeptide: NADH-quinone oxidoreductase subunit D (406 aa).

The protein belongs to the complex I 49 kDa subunit family. In terms of assembly, NDH-1 is composed of 14 different subunits. Subunits NuoB, C, D, E, F, and G constitute the peripheral sector of the complex.

The protein resides in the cell inner membrane. It carries out the reaction a quinone + NADH + 5 H(+)(in) = a quinol + NAD(+) + 4 H(+)(out). Its function is as follows. NDH-1 shuttles electrons from NADH, via FMN and iron-sulfur (Fe-S) centers, to quinones in the respiratory chain. The immediate electron acceptor for the enzyme in this species is believed to be ubiquinone. Couples the redox reaction to proton translocation (for every two electrons transferred, four hydrogen ions are translocated across the cytoplasmic membrane), and thus conserves the redox energy in a proton gradient. This chain is NADH-quinone oxidoreductase subunit D, found in Acidiphilium cryptum (strain JF-5).